The sequence spans 149 residues: Oocyte-expressed protein homolog (149 aa).

The disordered stretch occupies residues 1 to 22; that stretch reads MVDDAGAAESQRGKQTPAHSLE. In terms of domain architecture, KH; atypical spans 49 to 110; that stretch reads PLVFYLEAWL…RVQNRVKSML (62 aa).

It belongs to the KHDC1 family. In terms of assembly, component of the subcortical maternal complex (SCMC), at least composed of NLRP5, KHDC3L, OOEP, and TLE6 isoform 1. Within the complex, interacts with NLRP5, KHDC3L and TLE6 isoform 1. As part of the SCMC interacts with the SCMC-associated protein NLRP4F. The SCMC may facilitate translocation of its components between the nuclear and cytoplasmic compartments. Forms a scaffold complex with KHDC3L/FILIA, and interacts with BLM and TRIM25 at DNA replication forks.

Its subcellular location is the cytoplasm. The protein localises to the nucleus. Its function is as follows. Component of the subcortical maternal complex (SCMC), a multiprotein complex that plays a key role in early embryonic development. The SCMC complex is a structural constituent of cytoplasmic lattices, which consist in fibrous structures found in the cytoplasm of oocytes and preimplantation embryos. They are required to store maternal proteins critical for embryonic development, such as proteins that control epigenetic reprogramming of the preimplantation embryo, and prevent their degradation or activation. As part of the OOEP-KHDC3 scaffold, recruits BLM and TRIM25 to DNA replication forks, thereby promoting the ubiquitination of BLM by TRIM25, enhancing BLM retainment at replication forks and therefore promoting stalled replication fork restart. Positively regulates the homologous recombination-mediated DNA double-strand break (DSB) repair pathway by regulating ATM activation and RAD51 recruitment to DSBs in oocytes. Thereby contributes to oocyte survival and the resumption and completion of meiosis. The protein is Oocyte-expressed protein homolog of Homo sapiens (Human).